We begin with the raw amino-acid sequence, 291 residues long: MDITFKDVSYTYQPGTPFQGIGLKHINLTIESGSYTALIGHTGSGKSTLLQHLNALLKPTEGVVQIGERQITPETNNKNLKVIRQKVGMVFQFPESQLFEATVQKDIAFGPQNFGVPEAEALERAKAMVELVGLPEAVLEQSPFDLSGGQMRRVAIAGVLAMQPEVLILDEPTAGLDPVGRREMMGLFEKLHREQGMTIVMVTHQMDDVANYADHVVVLENGGIAKSGTPREIFADPEWLTSKQLGLPTTTQFAQALIKKGFGFPKVPLTEHELAAMLRDQLPQGAGGANE.

The ABC transporter domain maps to 3–246 (ITFKDVSYTY…PEWLTSKQLG (244 aa)). 40 to 47 (GHTGSGKS) contributes to the ATP binding site.

Belongs to the ABC transporter superfamily. Energy-coupling factor EcfA family. In terms of assembly, forms a stable energy-coupling factor (ECF) transporter complex composed of 2 membrane-embedded substrate-binding proteins (S component), 2 ATP-binding proteins (A component) and 2 transmembrane proteins (T component).

It is found in the cell membrane. Its function is as follows. ATP-binding (A) component of a common energy-coupling factor (ECF) ABC-transporter complex. Unlike classic ABC transporters this ECF transporter provides the energy necessary to transport a number of different substrates. The sequence is that of Energy-coupling factor transporter ATP-binding protein EcfA2 from Latilactobacillus sakei subsp. sakei (strain 23K) (Lactobacillus sakei subsp. sakei).